Here is a 224-residue protein sequence, read N- to C-terminus: UPF0758 protein Pfl01_5539 (224 aa).

One can recognise an MPN domain in the interval 102–224 (ALENPQVVRD…PLSMAECGWM (123 aa)). 3 residues coordinate Zn(2+): H173, H175, and D186. The short motif at 173–186 (HNHPSGNSDPSQAD) is the JAMM motif element.

It belongs to the UPF0758 family.

In Pseudomonas fluorescens (strain Pf0-1), this protein is UPF0758 protein Pfl01_5539.